A 212-amino-acid chain; its full sequence is Ropporin-1 (212 aa).

Residues 12–43 form the RIIa domain; sequence PELPELLKQFTKAAIRTQPPDLIQWAAEYFGA. Ser56 carries the phosphoserine modification. The interaction with RHPN1 stretch occupies residues 209–212; the sequence is VRLE.

It belongs to the ropporin family. Homodimer. Interacts with AKAP3. May interact with SPA17. Interacts with RHPN1. Interacts with FSCB; the interaction increases upon spermatozoa capacitation conditions. Interacts with CFAP61. Post-translationally, sumoylated, sumoylation decreases upon spermatozoa capacitation conditions.

It localises to the cell projection. The protein resides in the cilium. The protein localises to the flagellum. In terms of biological role, important for male fertility. With ROPN1L, involved in fibrous sheath integrity and sperm motility, plays a role in PKA-dependent signaling processes required for spermatozoa capacitation. The polypeptide is Ropporin-1 (Ropn1) (Rattus norvegicus (Rat)).